The following is a 225-amino-acid chain: UPF0758 protein XOO0462 (225 aa).

The 123-residue stretch at 102 to 224 (ALSDPPSVGR…PVSLAERGWL (123 aa)) folds into the MPN domain. Positions 173, 175, and 186 each coordinate Zn(2+). Residues 173–186 (HNHPSGNPEPSEAD) carry the JAMM motif motif.

The protein belongs to the UPF0758 family.

The protein is UPF0758 protein XOO0462 of Xanthomonas oryzae pv. oryzae (strain MAFF 311018).